The chain runs to 343 residues: Beta-ketoacyl-[acyl-carrier-protein] synthase III 1 (343 aa).

Active-site residues include C122 and H268. The interval Q269 to R273 is ACP-binding. N299 is a catalytic residue.

Belongs to the thiolase-like superfamily. FabH family. In terms of assembly, homodimer.

It localises to the cytoplasm. It catalyses the reaction malonyl-[ACP] + acetyl-CoA + H(+) = 3-oxobutanoyl-[ACP] + CO2 + CoA. It functions in the pathway lipid metabolism; fatty acid biosynthesis. Essential enzyme that catalyzes the condensation reaction of fatty acid synthesis by the addition to an acyl acceptor of two carbons from malonyl-ACP. Catalyzes the first condensation reaction which initiates fatty acid synthesis and may therefore play a role in governing the total rate of fatty acid production. Possesses both acetoacetyl-ACP synthase and acetyl transacylase activities. Its substrate specificity determines the biosynthesis of branched-chain of fatty acids. This chain is Beta-ketoacyl-[acyl-carrier-protein] synthase III 1, found in Streptomyces coelicolor (strain ATCC BAA-471 / A3(2) / M145).